The sequence spans 170 residues: 3-hydroxyacyl-[acyl-carrier-protein] dehydratase FabZ (170 aa).

His-66 is an active-site residue.

The protein belongs to the thioester dehydratase family. FabZ subfamily.

The protein localises to the cytoplasm. The catalysed reaction is a (3R)-hydroxyacyl-[ACP] = a (2E)-enoyl-[ACP] + H2O. Functionally, involved in unsaturated fatty acids biosynthesis. Catalyzes the dehydration of short chain beta-hydroxyacyl-ACPs and long chain saturated and unsaturated beta-hydroxyacyl-ACPs. This chain is 3-hydroxyacyl-[acyl-carrier-protein] dehydratase FabZ, found in Granulibacter bethesdensis (strain ATCC BAA-1260 / CGDNIH1).